The sequence spans 298 residues: Probable 3-hydroxyacyl-CoA dehydrogenase F54C8.1 (298 aa).

It belongs to the 3-hydroxyacyl-CoA dehydrogenase family. In terms of assembly, homodimer.

It localises to the mitochondrion matrix. It carries out the reaction a (3S)-3-hydroxyacyl-CoA + NAD(+) = a 3-oxoacyl-CoA + NADH + H(+). The protein operates within lipid metabolism; fatty acid beta-oxidation. The polypeptide is Probable 3-hydroxyacyl-CoA dehydrogenase F54C8.1 (Caenorhabditis elegans).